Reading from the N-terminus, the 339-residue chain is Dihydroorotate dehydrogenase (quinone) (339 aa).

Residues 62–66 (AGMDK) and Thr-86 contribute to the FMN site. Lys-66 contributes to the substrate binding site. 111–115 (NRMGF) is a binding site for substrate. FMN-binding residues include Asn-139 and Asn-172. A substrate-binding site is contributed by Asn-172. The active-site Nucleophile is Ser-175. Residue Asn-177 participates in substrate binding. Positions 217 and 245 each coordinate FMN. 246–247 (NT) is a binding site for substrate. FMN is bound by residues Gly-268, Gly-297, and 318–319 (YS).

It belongs to the dihydroorotate dehydrogenase family. Type 2 subfamily. As to quaternary structure, monomer. It depends on FMN as a cofactor.

Its subcellular location is the cell membrane. The enzyme catalyses (S)-dihydroorotate + a quinone = orotate + a quinol. The protein operates within pyrimidine metabolism; UMP biosynthesis via de novo pathway; orotate from (S)-dihydroorotate (quinone route): step 1/1. Functionally, catalyzes the conversion of dihydroorotate to orotate with quinone as electron acceptor. This Shewanella sp. (strain MR-4) protein is Dihydroorotate dehydrogenase (quinone).